We begin with the raw amino-acid sequence, 400 residues long: Aspartate aminotransferase (400 aa).

Residues Gly37, Trp126, and Asn176 each contribute to the L-aspartate site. Lys238 bears the N6-(pyridoxal phosphate)lysine mark. Arg367 is a binding site for L-aspartate.

Belongs to the class-I pyridoxal-phosphate-dependent aminotransferase family. As to quaternary structure, homodimer. Pyridoxal 5'-phosphate is required as a cofactor.

The protein localises to the cytoplasm. It catalyses the reaction L-aspartate + 2-oxoglutarate = oxaloacetate + L-glutamate. Catalyzes the reversible conversion of aspartate and 2-oxoglutarate to glutamate and oxaloacetate. Has very weak prephenate aminotransferase activity. This is Aspartate aminotransferase from Musicola paradisiaca (strain Ech703) (Dickeya paradisiaca).